The sequence spans 85 residues: U4-theraphotoxin-Hhn1a (85 aa).

The first 22 residues, 1–22 (MKVTLIAILTCAAALVLHTTAA), serve as a signal peptide directing secretion. Residues 23–48 (EELEAESQLMEVGMPDTELAAVDEER) constitute a propeptide that is removed on maturation. 3 cysteine pairs are disulfide-bonded: C52/C66, C56/C77, and C71/C82.

Belongs to the neurotoxin 12 (Hwtx-2) family. 02 (Hwtx-2) subfamily. In terms of assembly, monomer. As to expression, expressed by the venom gland.

The protein localises to the secreted. Its function is as follows. Neurotoxin active on both insects and mammals. This is U4-theraphotoxin-Hhn1a from Cyriopagopus hainanus (Chinese bird spider).